A 365-amino-acid polypeptide reads, in one-letter code: tRNA/tmRNA (uracil-C(5))-methyltransferase (365 aa).

S-adenosyl-L-methionine-binding residues include glutamine 189, tyrosine 217, asparagine 222, glutamate 238, and aspartate 298. Cysteine 323 serves as the catalytic Nucleophile. Glutamate 357 functions as the Proton acceptor in the catalytic mechanism.

Belongs to the class I-like SAM-binding methyltransferase superfamily. RNA M5U methyltransferase family. TrmA subfamily.

It catalyses the reaction uridine(54) in tRNA + S-adenosyl-L-methionine = 5-methyluridine(54) in tRNA + S-adenosyl-L-homocysteine + H(+). It carries out the reaction uridine(341) in tmRNA + S-adenosyl-L-methionine = 5-methyluridine(341) in tmRNA + S-adenosyl-L-homocysteine + H(+). Its function is as follows. Dual-specificity methyltransferase that catalyzes the formation of 5-methyluridine at position 54 (m5U54) in all tRNAs, and that of position 341 (m5U341) in tmRNA (transfer-mRNA). The protein is tRNA/tmRNA (uracil-C(5))-methyltransferase of Shewanella loihica (strain ATCC BAA-1088 / PV-4).